A 478-amino-acid polypeptide reads, in one-letter code: Chromosomal replication initiator protein DnaA (478 aa).

The tract at residues 1 to 95 (MNKTLNPQEV…DVLEKEITEE (95 aa)) is domain I, interacts with DnaA modulators. Positions 96–141 (INDLVQSMEEEDFALIDHTKPVIPNFFDQNTRVNFGGGPNNHHPTT) are domain II. Positions 142–358 (GVNPRFTFDN…GALLRIFALA (217 aa)) are domain III, AAA+ region. Residues Gly-186, Gly-188, Lys-189, and Thr-190 each coordinate ATP. The domain IV, binds dsDNA stretch occupies residues 359–478 (SFNKEEINMT…YKLTQFILRR (120 aa)).

This sequence belongs to the DnaA family. In terms of assembly, oligomerizes as a right-handed, spiral filament on DNA at oriC.

The protein localises to the cytoplasm. In terms of biological role, plays an essential role in the initiation and regulation of chromosomal replication. ATP-DnaA binds to the origin of replication (oriC) to initiate formation of the DNA replication initiation complex once per cell cycle. Binds the DnaA box (a 9 base pair repeat at the origin) and separates the double-stranded (ds)DNA. Forms a right-handed helical filament on oriC DNA; dsDNA binds to the exterior of the filament while single-stranded (ss)DNA is stabiized in the filament's interior. The ATP-DnaA-oriC complex binds and stabilizes one strand of the AT-rich DNA unwinding element (DUE), permitting loading of DNA polymerase. After initiation quickly degrades to an ADP-DnaA complex that is not apt for DNA replication. Binds acidic phospholipids. In Tropheryma whipplei (strain TW08/27) (Whipple's bacillus), this protein is Chromosomal replication initiator protein DnaA.